The chain runs to 333 residues: Biotin synthase (333 aa).

A Radical SAM core domain is found at 47–276 (FFKNQMEFCS…KSEIRLCGGR (230 aa)). Residues C65, C69, and C72 each contribute to the [4Fe-4S] cluster site. Positions 109, 141, 201, and 271 each coordinate [2Fe-2S] cluster.

It belongs to the radical SAM superfamily. Biotin synthase family. Homodimer. [4Fe-4S] cluster serves as cofactor. [2Fe-2S] cluster is required as a cofactor.

The catalysed reaction is (4R,5S)-dethiobiotin + (sulfur carrier)-SH + 2 reduced [2Fe-2S]-[ferredoxin] + 2 S-adenosyl-L-methionine = (sulfur carrier)-H + biotin + 2 5'-deoxyadenosine + 2 L-methionine + 2 oxidized [2Fe-2S]-[ferredoxin]. Its pathway is cofactor biosynthesis; biotin biosynthesis; biotin from 7,8-diaminononanoate: step 2/2. Catalyzes the conversion of dethiobiotin (DTB) to biotin by the insertion of a sulfur atom into dethiobiotin via a radical-based mechanism. This is Biotin synthase from Sulfurihydrogenibium sp. (strain YO3AOP1).